A 220-amino-acid chain; its full sequence is 7-cyano-7-deazaguanine synthase (220 aa).

7–17 (LSGGMDSSTLA) is a binding site for ATP. Zn(2+) is bound by residues cysteine 187, cysteine 195, cysteine 198, and cysteine 201.

It belongs to the QueC family. It depends on Zn(2+) as a cofactor.

It catalyses the reaction 7-carboxy-7-deazaguanine + NH4(+) + ATP = 7-cyano-7-deazaguanine + ADP + phosphate + H2O + H(+). The protein operates within purine metabolism; 7-cyano-7-deazaguanine biosynthesis. Catalyzes the ATP-dependent conversion of 7-carboxy-7-deazaguanine (CDG) to 7-cyano-7-deazaguanine (preQ(0)). This is 7-cyano-7-deazaguanine synthase from Methanospirillum hungatei JF-1 (strain ATCC 27890 / DSM 864 / NBRC 100397 / JF-1).